We begin with the raw amino-acid sequence, 166 residues long: Mitochondrial fission process protein 1 (166 aa).

The next 3 helical transmembrane spans lie at 33 to 53 (SLVK…YVAA), 78 to 98 (AIAA…IPGF), and 125 to 145 (TVTC…DSFV).

Belongs to the MTFP1 family.

It is found in the mitochondrion inner membrane. Involved in the mitochondrial division probably by regulating membrane fission. Loss-of-function leads to apoptosis. This Caenorhabditis elegans protein is Mitochondrial fission process protein 1 (mtp-18).